A 282-amino-acid chain; its full sequence is Transmembrane protein 41B (282 aa).

A disordered region spans residues Met-1–Pro-36. The next 6 helical transmembrane spans lie at Met-43 to Phe-63, Thr-102 to Gly-122, Leu-138 to Leu-160, Leu-188 to Ile-208, Pro-216 to Ile-236, and Ala-251 to Val-271. The segment at Gly-131 to Leu-242 is VTT domain; required for its function in autophagy.

Belongs to the TMEM41 family.

It is found in the endoplasmic reticulum membrane. The protein resides in the endomembrane system. It catalyses the reaction a 1,2-diacyl-sn-glycero-3-phospho-L-serine(in) = a 1,2-diacyl-sn-glycero-3-phospho-L-serine(out). It carries out the reaction cholesterol(in) = cholesterol(out). The enzyme catalyses a 1,2-diacyl-sn-glycero-3-phosphocholine(in) = a 1,2-diacyl-sn-glycero-3-phosphocholine(out). The catalysed reaction is a 1,2-diacyl-sn-glycero-3-phosphoethanolamine(in) = a 1,2-diacyl-sn-glycero-3-phosphoethanolamine(out). In terms of biological role, phospholipid scramblase involved in lipid homeostasis and membrane dynamics processes. Has phospholipid scramblase activity toward cholesterol and phosphatidylserine, as well as phosphatidylethanolamine and phosphatidylcholine. Required for autophagosome formation: participates in early stages of autophagosome biogenesis at the endoplasmic reticulum (ER) membrane by reequilibrating the leaflets of the ER as lipids are extracted by atg2 (atg2a or atg2b) to mediate autophagosome assembly. In addition to autophagy, involved in other processes in which phospholipid scramblase activity is required. Required for normal motor neuron development. In Danio rerio (Zebrafish), this protein is Transmembrane protein 41B.